The following is a 624-amino-acid chain: Chaperone protein HtpG (624 aa).

Residues 1 to 336 form an a; substrate-binding region; that stretch reads MKGQETRGFQ…SSDLPLNVSR (336 aa). The b stretch occupies residues 337–552; that stretch reads EILQDSTVTR…ADEMSTQMAK (216 aa). A c region spans residues 553 to 624; that stretch reads LFAAAGQKVP…IRRMNQLLVS (72 aa).

This sequence belongs to the heat shock protein 90 family. Homodimer.

The protein localises to the cytoplasm. Its function is as follows. Molecular chaperone. Has ATPase activity. The polypeptide is Chaperone protein HtpG (Escherichia coli O139:H28 (strain E24377A / ETEC)).